We begin with the raw amino-acid sequence, 115 residues long: UPF0738 protein SACOL1009 (115 aa).

Belongs to the UPF0738 family.

The polypeptide is UPF0738 protein SACOL1009 (Staphylococcus aureus (strain COL)).